We begin with the raw amino-acid sequence, 109 residues long: Nascent polypeptide-associated complex protein (109 aa).

Positions 3-69 (PMNPKQLKKL…TEEERVVLKI (67 aa)) constitute an NAC-A/B domain.

This sequence belongs to the NAC-alpha family. In terms of assembly, homodimer. Interacts with the ribosome. Binds ribosomal RNA.

Contacts the emerging nascent chain on the ribosome. The protein is Nascent polypeptide-associated complex protein of Pyrococcus abyssi (strain GE5 / Orsay).